Here is a 98-residue protein sequence, read N- to C-terminus: C-C motif chemokine 19 (98 aa).

The first 21 residues, 1–21, serve as a signal peptide directing secretion; it reads MALLLALSLLVLWTSPAPTLS. Cystine bridges form between C29–C55 and C30–C71.

It belongs to the intercrine beta (chemokine CC) family. In terms of assembly, interacts with TNFAIP6 (via Link domain). In terms of tissue distribution, expressed at high levels in the lymph nodes, thymus and appendix. Intermediate levels seen in colon and trachea, while low levels found in spleen, small intestine, lung, kidney and stomach.

The protein resides in the secreted. Its function is as follows. May play a role not only in inflammatory and immunological responses but also in normal lymphocyte recirculation and homing. May play an important role in trafficking of T-cells in thymus, and T-cell and B-cell migration to secondary lymphoid organs. Binds to chemokine receptor CCR7. Recombinant CCL19 shows potent chemotactic activity for T-cells and B-cells but not for granulocytes and monocytes. Binds to atypical chemokine receptor ACKR4 and mediates the recruitment of beta-arrestin (ARRB1/2) to ACKR4. In Homo sapiens (Human), this protein is C-C motif chemokine 19 (CCL19).